Here is a 426-residue protein sequence, read N- to C-terminus: Histidinol dehydrogenase (426 aa).

3 residues coordinate NAD(+): Y126, Q188, and N210. Substrate contacts are provided by S233, Q255, and H258. Residues Q255 and H258 each coordinate Zn(2+). Active-site proton acceptor residues include E323 and H324. Residues H324, D357, E411, and H416 each coordinate substrate. D357 contributes to the Zn(2+) binding site. H416 lines the Zn(2+) pocket.

It belongs to the histidinol dehydrogenase family. Requires Zn(2+) as cofactor.

The enzyme catalyses L-histidinol + 2 NAD(+) + H2O = L-histidine + 2 NADH + 3 H(+). It functions in the pathway amino-acid biosynthesis; L-histidine biosynthesis; L-histidine from 5-phospho-alpha-D-ribose 1-diphosphate: step 9/9. In terms of biological role, catalyzes the sequential NAD-dependent oxidations of L-histidinol to L-histidinaldehyde and then to L-histidine. This Heliobacterium mobile (Heliobacillus mobilis) protein is Histidinol dehydrogenase.